We begin with the raw amino-acid sequence, 529 residues long: Bifunctional purine biosynthesis protein PurH (529 aa).

Positions 1–148 (MQQRRPIRRA…KNHKDVAIVV (148 aa)) constitute an MGS-like domain.

The protein belongs to the PurH family.

It carries out the reaction (6R)-10-formyltetrahydrofolate + 5-amino-1-(5-phospho-beta-D-ribosyl)imidazole-4-carboxamide = 5-formamido-1-(5-phospho-D-ribosyl)imidazole-4-carboxamide + (6S)-5,6,7,8-tetrahydrofolate. It catalyses the reaction IMP + H2O = 5-formamido-1-(5-phospho-D-ribosyl)imidazole-4-carboxamide. It participates in purine metabolism; IMP biosynthesis via de novo pathway; 5-formamido-1-(5-phospho-D-ribosyl)imidazole-4-carboxamide from 5-amino-1-(5-phospho-D-ribosyl)imidazole-4-carboxamide (10-formyl THF route): step 1/1. It functions in the pathway purine metabolism; IMP biosynthesis via de novo pathway; IMP from 5-formamido-1-(5-phospho-D-ribosyl)imidazole-4-carboxamide: step 1/1. In Yersinia pseudotuberculosis serotype IB (strain PB1/+), this protein is Bifunctional purine biosynthesis protein PurH.